Reading from the N-terminus, the 126-residue chain is UPF0332 protein glr0978 (126 aa).

It belongs to the UPF0332 family.

This is UPF0332 protein glr0978 from Gloeobacter violaceus (strain ATCC 29082 / PCC 7421).